The primary structure comprises 223 residues: Probable iron-sulfur cluster repair protein HI_1677 (223 aa).

It belongs to the RIC family.

It localises to the cytoplasm. Functionally, di-iron-containing protein involved in the repair of iron-sulfur clusters. The protein is Probable iron-sulfur cluster repair protein HI_1677 of Haemophilus influenzae (strain ATCC 51907 / DSM 11121 / KW20 / Rd).